The primary structure comprises 169 residues: Allophycocyanin subunit beta-18 (169 aa).

The residue at position 72 (asparagine 72) is an N4-methylasparagine. Residue cysteine 82 participates in (2R,3E)-phycocyanobilin binding.

This sequence belongs to the phycobiliprotein family. As to quaternary structure, heterodimer of ApcE and this beta chain. Contains one covalently linked bilin chromophore.

The protein resides in the cellular thylakoid membrane. A variant beta-allophycocyanin (AP) which forms a complex with ApcE, a phycobilisome terminal emitter that influences energy transfer to photosystem II. This is Allophycocyanin subunit beta-18 (apcF) from Synechocystis sp. (strain ATCC 27184 / PCC 6803 / Kazusa).